A 339-amino-acid chain; its full sequence is MMVMDAKIFEIADKLYAQQALTQDESHVLFDAIIKGDVDPILLSAVLTALKIKGETPAEIAGAASALLANANAFPSPEYDFADIVGTGGDGANTINISTTAAFVAAACGVKVAKHGNRGVSSKSGSSDLLDKFGINLAMTPENARGALDELGVCFLFAPEYHSGVRHAMPVRQTLKTRTIFNVLGPLINPARPKIELMGVYDQSLVRPIAETMVAMGMKRAAVVHGSGLDEVAIHGETLVAEIINGEIKEYTLTPADFGLETYPLEAIKGGEPEENRAIITDILTGKGTDAQQGAVAVNVALLLRLFGQEDLKANTQQAIAAMQSGKAYELVNKLAARG.

Residues glycine 86, 89–90 (GD), threonine 94, 96–99 (NIST), 114–122 (KHGNRGVSS), and serine 126 contribute to the 5-phospho-alpha-D-ribose 1-diphosphate site. Glycine 86 contacts anthranilate. Serine 98 provides a ligand contact to Mg(2+). Asparagine 117 is a binding site for anthranilate. Residue arginine 172 coordinates anthranilate. 2 residues coordinate Mg(2+): aspartate 230 and glutamate 231.

This sequence belongs to the anthranilate phosphoribosyltransferase family. Homodimer. Mg(2+) serves as cofactor.

The enzyme catalyses N-(5-phospho-beta-D-ribosyl)anthranilate + diphosphate = 5-phospho-alpha-D-ribose 1-diphosphate + anthranilate. Its pathway is amino-acid biosynthesis; L-tryptophan biosynthesis; L-tryptophan from chorismate: step 2/5. Catalyzes the transfer of the phosphoribosyl group of 5-phosphorylribose-1-pyrophosphate (PRPP) to anthranilate to yield N-(5'-phosphoribosyl)-anthranilate (PRA). This chain is Anthranilate phosphoribosyltransferase, found in Photobacterium profundum (strain SS9).